The sequence spans 241 residues: Uracil-DNA glycosylase (241 aa).

The active-site Proton acceptor is Asp73.

Belongs to the uracil-DNA glycosylase (UDG) superfamily. UNG family.

It localises to the cytoplasm. The enzyme catalyses Hydrolyzes single-stranded DNA or mismatched double-stranded DNA and polynucleotides, releasing free uracil.. Excises uracil residues from the DNA which can arise as a result of misincorporation of dUMP residues by DNA polymerase or due to deamination of cytosine. This is Uracil-DNA glycosylase from Agrobacterium fabrum (strain C58 / ATCC 33970) (Agrobacterium tumefaciens (strain C58)).